A 567-amino-acid chain; its full sequence is TGF-beta receptor type-2 (567 aa).

The N-terminal stretch at Met1–Thr23 is a signal peptide. Residues Ile24–Gln166 are Extracellular-facing. 6 disulfide bridges follow: Cys51/Cys84, Cys54/Cys71, Cys61/Cys67, Cys77/Cys101, Cys121/Cys136, and Cys138/Cys143. Asn70 and Asn94 each carry an N-linked (GlcNAc...) asparagine glycan. Residues Val167–Tyr187 traverse the membrane as a helical segment. Over Cys188–Lys567 the chain is Cytoplasmic. The Protein kinase domain occupies Ile244 to Arg546. Residues Val250–Val258 and Lys277 each bind ATP. Asp379 (proton acceptor) is an active-site residue. Phosphoserine is present on residues Ser409, Ser548, and Ser553. Residues Glu545–Lys567 form a disordered region.

This sequence belongs to the protein kinase superfamily. TKL Ser/Thr protein kinase family. TGFB receptor subfamily. In terms of assembly, homodimer. Heterohexamer; TGFB1, TGFB2 and TGFB3 homodimeric ligands assemble a functional receptor composed of two TGFBR1 and TGFBR2 heterodimers to form a ligand-receptor heterohexamer. The respective affinity of TGFRB1 and TGFRB2 for the ligands may modulate the kinetics of assembly of the receptor and may explain the different biological activities of TGFB1, TGFB2 and TGFB3. Component of a complex composed of TSC22D1 (via N-terminus), TGFBR1 and TGFBR2; the interaction between TSC22D1 and TGFBR1 is inhibited by SMAD7 and promoted by TGFB1. Interacts with DAXX. Interacts with DYNLT4. Interacts with ZFYVE9; ZFYVE9 recruits SMAD2 and SMAD3 to the TGF-beta receptor. Interacts with and is activated by SCUBE3; this interaction does not affect TGFB1-binding to TGFBR2. Interacts with VPS39; this interaction is independent of the receptor kinase activity and of the presence of TGF-beta. Interacts with CLU. Requires Mg(2+) as cofactor. The cofactor is Mn(2+). Post-translationally, phosphorylated on a Ser/Thr residue in the cytoplasmic domain. As to expression, widely expressed in adult. Expressed primarily in mesenchyme and epidermis of the midgestational fetus.

Its subcellular location is the cell membrane. The protein resides in the membrane raft. The catalysed reaction is L-threonyl-[receptor-protein] + ATP = O-phospho-L-threonyl-[receptor-protein] + ADP + H(+). The enzyme catalyses L-seryl-[receptor-protein] + ATP = O-phospho-L-seryl-[receptor-protein] + ADP + H(+). In terms of biological role, transmembrane serine/threonine kinase forming with the TGF-beta type I serine/threonine kinase receptor, TGFBR1, the non-promiscuous receptor for the TGF-beta cytokines TGFB1, TGFB2 and TGFB3. Transduces the TGFB1, TGFB2 and TGFB3 signal from the cell surface to the cytoplasm and is thus regulating a plethora of physiological and pathological processes including cell cycle arrest in epithelial and hematopoietic cells, control of mesenchymal cell proliferation and differentiation, wound healing, extracellular matrix production, immunosuppression and carcinogenesis. The formation of the receptor complex composed of 2 TGFBR1 and 2 TGFBR2 molecules symmetrically bound to the cytokine dimer results in the phosphorylation and the activation of TGFRB1 by the constitutively active TGFBR2. Activated TGFBR1 phosphorylates SMAD2 which dissociates from the receptor and interacts with SMAD4. The SMAD2-SMAD4 complex is subsequently translocated to the nucleus where it modulates the transcription of the TGF-beta-regulated genes. This constitutes the canonical SMAD-dependent TGF-beta signaling cascade. Also involved in non-canonical, SMAD-independent TGF-beta signaling pathways. Has transforming growth factor beta-activated receptor activity. The protein is TGF-beta receptor type-2 (Tgfbr2) of Mus musculus (Mouse).